Here is a 901-residue protein sequence, read N- to C-terminus: Alpha-actinin-3 (901 aa).

Met1 carries the post-translational modification N-acetylmethionine. The interval 1–261 is actin-binding; that stretch reads MMMVLQPEGL…IMTYVSCFYH (261 aa). 2 consecutive Calponin-homology (CH) domains span residues 45-149 and 158-264; these read KQQR…LRFA and TSAK…HAFA. Spectrin repeat units lie at residues 288–398, 408–513, 523–634, and 644–747; these read KLME…WLLS, HLAE…ALER, QLQL…MLQE, and RLRR…EVEN. EF-hand domains are found at residues 760–795 and 796–831; these read EQLN…MGYD and LGEV…ETAE. Ca(2+) contacts are provided by Asp773, Asn777, Met779, Asp784, Asp809, and Asn811.

It belongs to the alpha-actinin family. As to quaternary structure, homodimer; antiparallel. Also forms heterodimers with ACTN2. Interacts with MYOZ1.

Its function is as follows. F-actin cross-linking protein which is thought to anchor actin to a variety of intracellular structures. This is a bundling protein. In Bos taurus (Bovine), this protein is Alpha-actinin-3 (ACTN3).